Here is an 813-residue protein sequence, read N- to C-terminus: Calpain-7 (813 aa).

Met1 bears the N-acetylmethionine mark. Thr95 bears the Phosphothreonine mark. The 309-residue stretch at 232–540 (RERFAYPMPF…YDVIYLSWNP (309 aa)) folds into the Calpain catalytic domain. Catalysis depends on residues Cys290, His458, and Asn478. The domain III stretch occupies residues 541–701 (GLLKESTCIH…INGKWSGQSA (161 aa)). The domain N stretch occupies residues 702-813 (GGCGNFQETH…VIPIKTTQLQ (112 aa)).

It belongs to the peptidase C2 family.

Its subcellular location is the nucleus. Its function is as follows. Calcium-regulated non-lysosomal thiol-protease. The chain is Calpain-7 (CAPN7) from Sus scrofa (Pig).